Reading from the N-terminus, the 318-residue chain is Aldo-keto reductase family 1 member C21 (318 aa).

NADP(+) is bound at residue 20-24 (GFGTA). Residue K31 coordinates substrate. An NADP(+)-binding site is contributed by D50. Y55 serves as the catalytic Proton donor. H117 contributes to the substrate binding site. NADP(+) contacts are provided by residues 166-167 (SN), Q190, 216-224 (YGVLGTQRY), and 270-280 (TSLKEERIKEN).

Belongs to the aldo/keto reductase family. Monomer.

The protein resides in the cytoplasm. It carries out the reaction androsterone + NADP(+) = 5alpha-androstan-3,17-dione + NADPH + H(+). The catalysed reaction is androsterone + NAD(+) = 5alpha-androstan-3,17-dione + NADH + H(+). Functionally, NADP-dependent 17-alpha-hydroxysteroid dehydrogenase that converts 5-alpha-androstane-3,17-dione into androsterone. Has lower 3-alpha-hydroxysteroid dehydrogenase activity. Has broad substrate specificity and acts on various 17-alpha-hydroxysteroids, 17-ketosteroids, 3-alpha hydroxysteroids and 3-ketosteroids. Reduction of keto groups is strictly stereoselective. Reduction of 17-ketosteroids yields only 17-alpha-hydroxysteroids. Likewise, reduction of 3-ketosteroids yields only 3-alpha-hydroxysteroids. The sequence is that of Aldo-keto reductase family 1 member C21 (Akr1c21) from Rattus norvegicus (Rat).